Reading from the N-terminus, the 620-residue chain is Probable indole-3-acetic acid-amido synthetase GH3.7 (620 aa).

This sequence belongs to the IAA-amido conjugating enzyme family. Ubiquitous.

Its function is as follows. May catalyze the synthesis of indole-3-acetic acid (IAA)-amino acid conjugates, providing a mechanism for the plant to cope with the presence of excess auxin. The polypeptide is Probable indole-3-acetic acid-amido synthetase GH3.7 (GH3.7) (Oryza sativa subsp. japonica (Rice)).